A 381-amino-acid polypeptide reads, in one-letter code: L-lactate dehydrogenase (381 aa).

The 380-residue stretch at 1 to 380 (MIISSASDYR…KPEALVDLSK (380 aa)) folds into the FMN hydroxy acid dehydrogenase domain. A substrate-binding site is contributed by Tyr-24. Ser-106 and Gln-127 together coordinate FMN. A substrate-binding site is contributed by Tyr-129. FMN is bound at residue Thr-155. Arg-164 provides a ligand contact to substrate. Lys-251 is a binding site for FMN. His-275 (proton acceptor) is an active-site residue. Residue Arg-278 coordinates substrate. 306 to 330 (DSGIRNGLDIVRMLALGADATMLGR) contributes to the FMN binding site.

Belongs to the FMN-dependent alpha-hydroxy acid dehydrogenase family. Requires FMN as cofactor.

It localises to the cell inner membrane. It catalyses the reaction (S)-lactate + A = pyruvate + AH2. In terms of biological role, catalyzes the conversion of L-lactate to pyruvate. Is coupled to the respiratory chain. The polypeptide is L-lactate dehydrogenase (Haemophilus influenzae (strain 86-028NP)).